A 221-amino-acid polypeptide reads, in one-letter code: Endo-1,4-beta-xylanase I (221 aa).

Residues Met-1 to Arg-30 form the signal peptide. The region spanning Gln-31–Asn-219 is the GH11 domain. Glu-115 functions as the Nucleophile in the catalytic mechanism. Residues Asp-126 to Ile-157 are disordered. Catalysis depends on Glu-206, which acts as the Proton donor.

The protein belongs to the glycosyl hydrolase 11 (cellulase G) family. Post-translationally, the N-terminus is blocked.

It localises to the secreted. It carries out the reaction Endohydrolysis of (1-&gt;4)-beta-D-xylosidic linkages in xylans.. Its pathway is glycan degradation; xylan degradation. Major xylan-degrading enzyme. Contributes to the hydrolysis of arabinoxylan, the major component of maize cell-walls. In Cochliobolus carbonum (Maize leaf spot fungus), this protein is Endo-1,4-beta-xylanase I (XYL1).